The following is a 415-amino-acid chain: Serine hydroxymethyltransferase (415 aa).

Residues L117 and 121-123 (GHL) contribute to the (6S)-5,6,7,8-tetrahydrofolate site. K226 is subject to N6-(pyridoxal phosphate)lysine.

Belongs to the SHMT family. As to quaternary structure, homodimer. It depends on pyridoxal 5'-phosphate as a cofactor.

The protein resides in the cytoplasm. It catalyses the reaction (6R)-5,10-methylene-5,6,7,8-tetrahydrofolate + glycine + H2O = (6S)-5,6,7,8-tetrahydrofolate + L-serine. It participates in one-carbon metabolism; tetrahydrofolate interconversion. It functions in the pathway amino-acid biosynthesis; glycine biosynthesis; glycine from L-serine: step 1/1. In terms of biological role, catalyzes the reversible interconversion of serine and glycine with tetrahydrofolate (THF) serving as the one-carbon carrier. This reaction serves as the major source of one-carbon groups required for the biosynthesis of purines, thymidylate, methionine, and other important biomolecules. Also exhibits THF-independent aldolase activity toward beta-hydroxyamino acids, producing glycine and aldehydes, via a retro-aldol mechanism. The polypeptide is Serine hydroxymethyltransferase (Leptospira interrogans serogroup Icterohaemorrhagiae serovar copenhageni (strain Fiocruz L1-130)).